A 602-amino-acid polypeptide reads, in one-letter code: Probable pectinesterase/pectinesterase inhibitor 64 (602 aa).

The chain crosses the membrane as a helical span at residues 36–56; that stretch reads ILIIIAASCILLLLISLLIYA. The interval 62-91 is disordered; that stretch reads SRNHHNPSHQTPTSDDHPPPETPPSPPPIA. Over residues 81–90 the composition is skewed to pro residues; it reads PETPPSPPPI. The interval 87 to 237 is pectinesterase inhibitor 64; it reads PPPIAQIRLA…VNLTGNALSM (151 aa). N-linked (GlcNAc...) asparagine glycosylation is found at Asn98, Asn156, Asn212, Asn229, and Asn315. Residues 288–595 form a pectinesterase 64 region; that stretch reads DVTVCKNGGK…YSVANFIQAD (308 aa). Thr367 and Gln397 together coordinate substrate. Asp420 functions as the Proton donor; for pectinesterase activity in the catalytic mechanism. Residues Cys434 and Cys454 are joined by a disulfide bond. The active-site Nucleophile; for pectinesterase activity is the Asp441. N-linked (GlcNAc...) asparagine glycans are attached at residues Asn492 and Asn496. Residues Arg518 and Trp520 each coordinate substrate.

In the N-terminal section; belongs to the PMEI family. The protein in the C-terminal section; belongs to the pectinesterase family. In terms of tissue distribution, expressed in siliques.

It localises to the membrane. It carries out the reaction [(1-&gt;4)-alpha-D-galacturonosyl methyl ester](n) + n H2O = [(1-&gt;4)-alpha-D-galacturonosyl](n) + n methanol + n H(+). The protein operates within glycan metabolism; pectin degradation; 2-dehydro-3-deoxy-D-gluconate from pectin: step 1/5. Its function is as follows. Acts in the modification of cell walls via demethylesterification of cell wall pectin. This is Probable pectinesterase/pectinesterase inhibitor 64 (PME64) from Arabidopsis thaliana (Mouse-ear cress).